The following is a 268-amino-acid chain: Tryptophan synthase alpha chain (268 aa).

Active-site proton acceptor residues include glutamate 49 and aspartate 60.

It belongs to the TrpA family. In terms of assembly, tetramer of two alpha and two beta chains.

It catalyses the reaction (1S,2R)-1-C-(indol-3-yl)glycerol 3-phosphate + L-serine = D-glyceraldehyde 3-phosphate + L-tryptophan + H2O. It participates in amino-acid biosynthesis; L-tryptophan biosynthesis; L-tryptophan from chorismate: step 5/5. Its function is as follows. The alpha subunit is responsible for the aldol cleavage of indoleglycerol phosphate to indole and glyceraldehyde 3-phosphate. This Escherichia coli O6:H1 (strain CFT073 / ATCC 700928 / UPEC) protein is Tryptophan synthase alpha chain.